A 134-amino-acid chain; its full sequence is uncharacterized protein (134 aa).

The next 2 membrane-spanning stretches (helical) occupy residues 49-69 and 71-91; these read VAVP…SLDV and LSMT…LNKV.

The protein resides in the cell membrane. This is an uncharacterized protein from Mycobacterium tuberculosis (strain ATCC 25618 / H37Rv).